The chain runs to 416 residues: Tyrosine--tRNA ligase (416 aa).

Residues 55-64 carry the 'HIGH' region motif; the sequence is PTGSEIHLGH. Residues 249 to 253 carry the 'KMSKS' region motif; the sequence is KMSKS. K252 is a binding site for ATP. The region spanning 352-416 is the S4 RNA-binding domain; sequence TKAFHLLSSI…GKKTFRRISN (65 aa).

This sequence belongs to the class-I aminoacyl-tRNA synthetase family. TyrS type 2 subfamily. In terms of assembly, homodimer.

The protein resides in the cytoplasm. The catalysed reaction is tRNA(Tyr) + L-tyrosine + ATP = L-tyrosyl-tRNA(Tyr) + AMP + diphosphate + H(+). Functionally, catalyzes the attachment of tyrosine to tRNA(Tyr) in a two-step reaction: tyrosine is first activated by ATP to form Tyr-AMP and then transferred to the acceptor end of tRNA(Tyr). This is Tyrosine--tRNA ligase from Prochlorococcus marinus (strain SARG / CCMP1375 / SS120).